A 478-amino-acid chain; its full sequence is Protein nucleotidyltransferase YdiU (478 aa).

Gly84, Gly86, Arg87, Lys107, Asp119, Gly120, Arg170, and Arg177 together coordinate ATP. Asp246 serves as the catalytic Proton acceptor. Residues Asn247 and Asp256 each contribute to the Mg(2+) site. Residue Asp256 coordinates ATP.

It belongs to the SELO family. The cofactor is Mg(2+). Requires Mn(2+) as cofactor.

The catalysed reaction is L-seryl-[protein] + ATP = 3-O-(5'-adenylyl)-L-seryl-[protein] + diphosphate. It catalyses the reaction L-threonyl-[protein] + ATP = 3-O-(5'-adenylyl)-L-threonyl-[protein] + diphosphate. It carries out the reaction L-tyrosyl-[protein] + ATP = O-(5'-adenylyl)-L-tyrosyl-[protein] + diphosphate. The enzyme catalyses L-histidyl-[protein] + UTP = N(tele)-(5'-uridylyl)-L-histidyl-[protein] + diphosphate. The catalysed reaction is L-seryl-[protein] + UTP = O-(5'-uridylyl)-L-seryl-[protein] + diphosphate. It catalyses the reaction L-tyrosyl-[protein] + UTP = O-(5'-uridylyl)-L-tyrosyl-[protein] + diphosphate. In terms of biological role, nucleotidyltransferase involved in the post-translational modification of proteins. It can catalyze the addition of adenosine monophosphate (AMP) or uridine monophosphate (UMP) to a protein, resulting in modifications known as AMPylation and UMPylation. This chain is Protein nucleotidyltransferase YdiU, found in Escherichia coli O127:H6 (strain E2348/69 / EPEC).